The following is a 701-amino-acid chain: Protein UL29/UL28 (701 aa).

The disordered stretch occupies residues 1 to 33; that stretch reads MSGRRKGCSAATASSSSSSPPSRLPPLPGHARR.

Belongs to the herpesviridae US22 family. As to quaternary structure, interacts with UL38 and host HDAC1; these interactions are necessary for the HDAC1 interaction with UL38. Interacts with host MTA2.

The protein resides in the virion. It is found in the host nucleus. It localises to the host cytoplasm. Its function is as follows. Contributes to activation of immediate-early gene expression. In Homo sapiens (Human), this protein is Protein UL29/UL28 (UL29).